Reading from the N-terminus, the 652-residue chain is DNA ligase (652 aa).

NAD(+)-binding positions include 29–33, 78–79, and Glu107; these read DSEYD and SL. Lys109 acts as the N6-AMP-lysine intermediate in catalysis. Arg130, Glu164, Lys278, and Lys302 together coordinate NAD(+). Zn(2+) contacts are provided by Cys395, Cys398, Cys413, and Cys418. A BRCT domain is found at 577-652; the sequence is VADAALSGLT…VRDEAWLESL (76 aa).

It belongs to the NAD-dependent DNA ligase family. LigA subfamily. Mg(2+) is required as a cofactor. The cofactor is Mn(2+).

The catalysed reaction is NAD(+) + (deoxyribonucleotide)n-3'-hydroxyl + 5'-phospho-(deoxyribonucleotide)m = (deoxyribonucleotide)n+m + AMP + beta-nicotinamide D-nucleotide.. Functionally, DNA ligase that catalyzes the formation of phosphodiester linkages between 5'-phosphoryl and 3'-hydroxyl groups in double-stranded DNA using NAD as a coenzyme and as the energy source for the reaction. It is essential for DNA replication and repair of damaged DNA. This is DNA ligase from Streptococcus pneumoniae (strain P1031).